The following is a 373-amino-acid chain: MLPWLLVFSALGIQAWGDSSWNKTQAKQVSEGLQYLFENISQLTEKGLPTDVSTTVSRKAWGAEAVGCSIQLTTPVNVLVIHHVPGLECHDQTVCSQRLRELQAHHVHNNSGCDVAYNFLVGDDGRVYEGVGWNIQGVHTQGYNNISLGFAFFGTKKGHSPSPAALSAMENLITYAVQKGHLSSSYVQPLLGKGENCLAPRQKTSLKKACPGVVPRSVWGARETHCPRMTLPAKYGIIIHTAGRTCNISDECRLLVRDIQSFYIDRLKSCDIGYNFLVGQDGAIYEGVGWNVQGSSTPGYDDIALGITFMGTFTGIPPNAAALEAAQDLIQCAMVKGYLTPNYLLVGHSDVARTLSPGQALYNIISTWPHFKH.

The signal sequence occupies residues 1 to 17; the sequence is MLPWLLVFSALGIQAWG. Residues Asn-22, Asn-39, Asn-109, Asn-145, and Asn-247 are each glycosylated (N-linked (GlcNAc...) asparagine). N-acetylmuramoyl-L-alanine amidase domains lie at 74-212 and 235-358; these read TPVN…ACPG and YGII…LSPG. Disulfide bonds link Cys-210–Cys-332, Cys-226–Cys-270, and Cys-246–Cys-252. 2 residues coordinate peptidoglycan: Tyr-263 and Tyr-274. Interaction with murein stretches follow at residues 293 to 302 and 353 to 354; these read QGSSTPGYDD and RT.

Belongs to the N-acetylmuramoyl-L-alanine amidase 2 family. In terms of assembly, homodimer; disulfide-linked. Heterodimer with PGLYRP3; disulfide-linked. In terms of processing, N-glycosylated. Detected in skin epidermis, eccrine sweat glands and ducts, mucous cells in the submandibular salivary gland, mucous cells in the throat, ciliary body epithelial cells of the eye, small intestine, colon, stomach and in mature epithelial cells of the tongue (at protein level). High expression in skin and esophagus. Expressed also to a much lesser extent in the tonsils and thymus.

Its subcellular location is the secreted. Its function is as follows. Pattern receptor that binds to murein peptidoglycans (PGN) of Gram-positive bacteria. Has bactericidal activity towards Gram-positive bacteria. May kill Gram-positive bacteria by interfering with peptidoglycan biosynthesis. Also binds to Gram-negative bacteria, and has bacteriostatic activity towards Gram-negative bacteria. Plays a role in innate immunity. The sequence is that of Peptidoglycan recognition protein 4 (PGLYRP4) from Homo sapiens (Human).